We begin with the raw amino-acid sequence, 338 residues long: Phenylalanine--tRNA ligase alpha subunit (338 aa).

Glu253 serves as a coordination point for Mg(2+).

It belongs to the class-II aminoacyl-tRNA synthetase family. Phe-tRNA synthetase alpha subunit type 1 subfamily. Tetramer of two alpha and two beta subunits. Mg(2+) is required as a cofactor.

The protein resides in the cytoplasm. It catalyses the reaction tRNA(Phe) + L-phenylalanine + ATP = L-phenylalanyl-tRNA(Phe) + AMP + diphosphate + H(+). The protein is Phenylalanine--tRNA ligase alpha subunit of Trichlorobacter lovleyi (strain ATCC BAA-1151 / DSM 17278 / SZ) (Geobacter lovleyi).